The sequence spans 240 residues: Tetrahydromethanopterin S-methyltransferase subunit A (240 aa).

Topologically, residues 1–216 (MADKKAPASG…DAALIAKFNS (216 aa)) are cytoplasmic. His-85 contributes to the 5-hydroxybenzimidazolylcob(I)amide binding site. A helical transmembrane segment spans residues 217–234 (GYYNGKIQGIAIGLFLSL). Residues 235-240 (LIFSLL) are Extracellular-facing.

Belongs to the MtrA family. The complex is composed of 8 subunits; MtrA, MtrB, MtrC, MtrD, MtrE, MtrF, MtrG and MtrH. 5-hydroxybenzimidazolylcob(I)amide serves as cofactor.

It is found in the cell membrane. It carries out the reaction 5-methyl-5,6,7,8-tetrahydromethanopterin + coenzyme M + 2 Na(+)(in) = 5,6,7,8-tetrahydromethanopterin + methyl-coenzyme M + 2 Na(+)(out). It functions in the pathway one-carbon metabolism; methanogenesis from CO(2); methyl-coenzyme M from 5,10-methylene-5,6,7,8-tetrahydromethanopterin: step 2/2. Functionally, part of a complex that catalyzes the formation of methyl-coenzyme M and tetrahydromethanopterin from coenzyme M and methyl-tetrahydromethanopterin. This is an energy-conserving, sodium-ion translocating step. This chain is Tetrahydromethanopterin S-methyltransferase subunit A, found in Methanococcus aeolicus (strain ATCC BAA-1280 / DSM 17508 / OCM 812 / Nankai-3).